A 360-amino-acid chain; its full sequence is Photosystem II protein D1 (360 aa).

The next 3 helical transmembrane spans lie at 29 to 46, 118 to 133, and 142 to 156; these read YIGWFGVLMFPLLLTATT, HFLLGVACYMGREWEL, and WIAVAYSAPVAAATA. Residue His118 participates in chlorophyll a binding. Residue Tyr126 coordinates pheophytin a. Asp170 and Glu189 together coordinate [CaMn4O5] cluster. A helical transmembrane segment spans residues 197-218; the sequence is FHMMGVAGVFGGSLFSAMHGSL. Residue His198 coordinates chlorophyll a. Residues His215 and 264 to 265 contribute to the a quinone site; that span reads SF. Position 215 (His215) interacts with Fe cation. His272 lines the Fe cation pocket. A helical membrane pass occupies residues 274–288; sequence FLALWPVVGIWFTAL. [CaMn4O5] cluster is bound by residues His332, Glu333, Asp342, and Ala344. Positions 345–360 are excised as a propeptide; it reads SGEVMPVALTAPSINA.

This sequence belongs to the reaction center PufL/M/PsbA/D family. As to quaternary structure, PSII is composed of 1 copy each of membrane proteins PsbA, PsbB, PsbC, PsbD, PsbE, PsbF, PsbH, PsbI, PsbJ, PsbK, PsbL, PsbM, PsbT, PsbX, PsbY, PsbZ, Psb30/Ycf12, at least 3 peripheral proteins of the oxygen-evolving complex and a large number of cofactors. It forms dimeric complexes. It depends on The D1/D2 heterodimer binds P680, chlorophylls that are the primary electron donor of PSII, and subsequent electron acceptors. It shares a non-heme iron and each subunit binds pheophytin, quinone, additional chlorophylls, carotenoids and lipids. D1 provides most of the ligands for the Mn4-Ca-O5 cluster of the oxygen-evolving complex (OEC). There is also a Cl(-1) ion associated with D1 and D2, which is required for oxygen evolution. The PSII complex binds additional chlorophylls, carotenoids and specific lipids. as a cofactor. Post-translationally, tyr-161 forms a radical intermediate that is referred to as redox-active TyrZ, YZ or Y-Z. In terms of processing, C-terminally processed by CTPA; processing is essential to allow assembly of the oxygen-evolving complex and thus photosynthetic growth.

The protein resides in the plastid. The protein localises to the cyanelle thylakoid membrane. The enzyme catalyses 2 a plastoquinone + 4 hnu + 2 H2O = 2 a plastoquinol + O2. Functionally, photosystem II (PSII) is a light-driven water:plastoquinone oxidoreductase that uses light energy to abstract electrons from H(2)O, generating O(2) and a proton gradient subsequently used for ATP formation. It consists of a core antenna complex that captures photons, and an electron transfer chain that converts photonic excitation into a charge separation. The D1/D2 (PsbA/PsbD) reaction center heterodimer binds P680, the primary electron donor of PSII as well as several subsequent electron acceptors. In Cyanophora paradoxa, this protein is Photosystem II protein D1.